The chain runs to 1229 residues: Nuclear envelope pore membrane protein POM 121C (1229 aa).

The segment covering 1 to 10 (MSPAAAAAGA) has biased composition (low complexity). Residues 1-24 (MSPAAAAAGAGERRRPIASVRDGR) form a disordered region. The cisternal side stretch occupies residues 1-40 (MSPAAAAAGAGERRRPIASVRDGRGRGCGGPAGAALLGLS). Residues 1-398 (MSPAAAAAGA…AITSSYSSTR (398 aa)) form a required for targeting to the nucleus and nuclear pore complex region. Positions 11–24 (GERRRPIASVRDGR) are enriched in basic and acidic residues. The helical transmembrane segment at 41-61 (LVGLLLYLVPAAAALAWLAVG) threads the bilayer. Residues 62-1229 (TTAAWWGLSR…QARRQHTRKK (1168 aa)) are pore side. Phosphoserine is present on S81. Disordered stretches follow at residues 90–200 (RTLF…LPDR), 296–507 (KKKK…LGYS), 579–747 (KKMQ…TAPT), 936–966 (PLPS…ALTP), and 1202–1229 (PSFS…TRKK). A compositionally biased stretch (pro residues) spans 155–166 (ARPAPRSTPPSQ). Low complexity predominate over residues 176–189 (PSLPTPLLRPSGRP). A phosphoserine mark is found at S322, S328, S348, S370, and S373. Positions 374–400 (LTGAYTSGIPSSSRNAITSSYSSTRGI) are enriched in polar residues. The span at 409–422 (PSSSPFSSPASSRS) shows a compositional bias: low complexity. Basic and acidic residues-rich tracts occupy residues 427–439 (RPAK…ELCH) and 449–463 (ADKE…DTTP). The span at 468-479 (NSNSQSTPGSSG) shows a compositional bias: polar residues. Residues 612 to 629 (PPLGLSQSGPPGLLPSPS) are compositionally biased toward low complexity. A compositionally biased stretch (polar residues) spans 660-673 (QAETATKPQATSAP). Low complexity-rich tracts occupy residues 689–703 (SPSS…SASP) and 726–747 (SVSA…TAPT). Over residues 1219–1229 (LQARRQHTRKK) the composition is skewed to basic residues.

The protein belongs to the POM121 family.

It localises to the nucleus. It is found in the nuclear pore complex. The protein resides in the nucleus membrane. The protein localises to the endoplasmic reticulum membrane. Essential component of the nuclear pore complex (NPC). The repeat-containing domain may be involved in anchoring components of the pore complex to the pore membrane. When overexpressed in cells induces the formation of cytoplasmic annulate lamellae (AL). This Homo sapiens (Human) protein is Nuclear envelope pore membrane protein POM 121C (POM121C).